Reading from the N-terminus, the 2429-residue chain is Highly reducing polyketide synthase acrA (2429 aa).

The Ketosynthase family 3 (KS3) domain occupies 4 to 436 (PEPIAIVGMG…GTNAHAIIES (433 aa)). Residues Cys-177, His-314, and His-356 each act as for beta-ketoacyl synthase activity in the active site. The malonyl-CoA:ACP transacylase (MAT) domain stretch occupies residues 541–861 (VFTGQGAQWP…PYSGTLSRGQ (321 aa)). The tract at residues 931-1068 (HPLLGVRSTE…GTVRVVLGPA (138 aa)) is N-terminal hotdog fold. Residues 931 to 1229 (HPLLGVRSTE…RCSSLTPPGP (299 aa)) form a dehydratase (DH) domain region. Residues 931–1230 (HPLLGVRSTE…CSSLTPPGPR (300 aa)) enclose the PKS/mFAS DH domain. The active-site Proton acceptor; for dehydratase activity is the His-963. Residues 1082 to 1230 (VFHEVKTERF…CSSLTPPGPR (149 aa)) form a C-terminal hotdog fold region. The active-site Proton donor; for dehydratase activity is Asp-1141. The interval 1388-1577 (NGYMGRVAGQ…VNDFVDESKY (190 aa)) is methyltransferase (MT) domain. A ketoreductase (KR) domain region spans residues 2065–2235 (TYLLVGCTGG…ARGLAASVFH (171 aa)). Residues 2351–2428 (EVDGVIQEAF…ELCREAASEV (78 aa)) enclose the Carrier domain. Residue Ser-2388 is modified to O-(pantetheine 4'-phosphoryl)serine.

It participates in secondary metabolite biosynthesis. In terms of biological role, highly reducing polyketide synthase; part of the cluster that mediates the biosynthesis of acurin A, a highly reduced polyketide coupled to a serine via a peptide bond. The activities of the highly reducing polyketide synthase acrA and the nonribosomal peptide synthetase acrB are collectively responsible for the synthesis of the acurin A core structure with a heptaketide backbone produced by acrA covalently fused to a L-serine by acrB. After the formation of the PK-NRP hybrid product, it is detached from acrB by reductive release to set up the formation of the lactam ring by aldol condensation. The hydrolyase acrC then catalyzes water loss to generate a double bond in the ring. This double bond is probably reduced, which is followed by three oxidations at C-22 to generate the carboxylic acid moiety, involving probably the FAD-binding monooxygenase acrE and the cytochrome P450 monooxygenases acrD and acrF. Finally, a last methylation step performed by the O-methyltransferase acrG leads to the production of acurin A. This Aspergillus aculeatus (strain ATCC 16872 / CBS 172.66 / WB 5094) protein is Highly reducing polyketide synthase acrA.